The chain runs to 503 residues: Probable cytochrome P450 303a1 (503 aa).

A heme-binding site is contributed by Cys448.

It belongs to the cytochrome P450 family. Requires heme as cofactor.

Its subcellular location is the endoplasmic reticulum membrane. It localises to the microsome membrane. May be involved in the metabolism of insect hormones and in the breakdown of synthetic insecticides. In Drosophila melanogaster (Fruit fly), this protein is Probable cytochrome P450 303a1 (Cyp303a1).